We begin with the raw amino-acid sequence, 335 residues long: Dihydroorotate dehydrogenase (quinone) (335 aa).

FMN is bound by residues 59-63 and threonine 83; that span reads AGLDK. Substrate is bound at residue lysine 63. A substrate-binding site is contributed by 108 to 112; it reads NRMGF. Residues asparagine 136 and asparagine 169 each coordinate FMN. A substrate-binding site is contributed by asparagine 169. Serine 172 (nucleophile) is an active-site residue. Asparagine 174 is a substrate binding site. Lysine 214 and threonine 242 together coordinate FMN. Residue 243–244 coordinates substrate; it reads NT. FMN is bound by residues glycine 265, glycine 294, and 315–316; that span reads YS.

Belongs to the dihydroorotate dehydrogenase family. Type 2 subfamily. Monomer. It depends on FMN as a cofactor.

It localises to the cell membrane. The enzyme catalyses (S)-dihydroorotate + a quinone = orotate + a quinol. It participates in pyrimidine metabolism; UMP biosynthesis via de novo pathway; orotate from (S)-dihydroorotate (quinone route): step 1/1. Its function is as follows. Catalyzes the conversion of dihydroorotate to orotate with quinone as electron acceptor. This chain is Dihydroorotate dehydrogenase (quinone), found in Neisseria meningitidis serogroup B (strain ATCC BAA-335 / MC58).